The primary structure comprises 293 residues: tRNA-cytidine(32) 2-sulfurtransferase (293 aa).

Residues 62 to 67 (SGGKDS) carry the PP-loop motif motif. 3 residues coordinate [4Fe-4S] cluster: Cys137, Cys140, and Cys228.

It belongs to the TtcA family. In terms of assembly, homodimer. Requires Mg(2+) as cofactor. The cofactor is [4Fe-4S] cluster.

It is found in the cytoplasm. The enzyme catalyses cytidine(32) in tRNA + S-sulfanyl-L-cysteinyl-[cysteine desulfurase] + AH2 + ATP = 2-thiocytidine(32) in tRNA + L-cysteinyl-[cysteine desulfurase] + A + AMP + diphosphate + H(+). Its pathway is tRNA modification. In terms of biological role, catalyzes the ATP-dependent 2-thiolation of cytidine in position 32 of tRNA, to form 2-thiocytidine (s(2)C32). The sulfur atoms are provided by the cysteine/cysteine desulfurase (IscS) system. The protein is tRNA-cytidine(32) 2-sulfurtransferase of Brucella abortus (strain S19).